The sequence spans 115 residues: Large ribosomal subunit protein bL20c (115 aa).

This sequence belongs to the bacterial ribosomal protein bL20 family.

The protein resides in the plastid. The protein localises to the organellar chromatophore. Binds directly to 23S ribosomal RNA and is necessary for the in vitro assembly process of the 50S ribosomal subunit. It is not involved in the protein synthesizing functions of that subunit. The chain is Large ribosomal subunit protein bL20c from Paulinella chromatophora.